Reading from the N-terminus, the 477-residue chain is Mitochondrial adenyl nucleotide antiporter SLC25A24 (477 aa).

Residues 1-173 (MLRWLRGFVL…RFWKHSTGID (173 aa)) form a regulatory N-terminal domain region. Residues 1–197 (MLRWLRGFVL…EKKSGQWWRQ (197 aa)) lie on the Mitochondrial intermembrane side of the membrane. EF-hand domains lie at 19-54 (EPPTRYETLFQKLDRNGDGVVDISELQEGLKSLGIP), 61-85 (EKIFTTGDVNKDGKLDFEEFMKYLK), 86-121 (DHEKKMKLAFKSLDKNNDGKIEASEIVQSLQILGLT), and 122-157 (ISEQQAELILQSIDADGTMTVDWNEWRDYFLFNPVT). Ca(2+) contacts are provided by Asp-32, Asn-34, Asp-36, Val-38, Glu-43, Asp-68, Asn-70, Asp-72, Lys-74, Glu-79, Asp-99, Asn-101, Asp-103, Lys-105, Glu-110, Asp-135, Asp-137, Thr-139, Thr-141, and Glu-146. Residues 159 to 168 (IEEIIRFWKH) form a linker region region. The segment at 174-477 (IGDSLTIPDE…MKQTLGVTQK (304 aa)) is C-terminal transmembrane transporter domain. Solcar repeat units follow at residues 192 to 278 (GQWW…YKKL), 286 to 371 (IGTF…LKSH), and 383 to 471 (PGVM…MKQT). The helical transmembrane segment at 198-215 (LLAGGVAGAVSRTSTAPL) threads the bilayer. The Mitochondrial matrix portion of the chain corresponds to 216-252 (DRLKVMMQVHGSKSAKMNIYGGFQQMVKEGGIRSLWR). The helical transmembrane segment at 253–272 (GNGTNVIKIAPETAVKFWAY) threads the bilayer. At 273–295 (EQYKKLLTEEGQKIGTFERFVSG) the chain is on the mitochondrial intermembrane side. A helical transmembrane segment spans residues 296–309 (SMAGATAQTFIYPM). Residues 310–345 (EVLKTRLAVGKTGQYSGMFDCAKKILKYEGMGAFYK) are Mitochondrial matrix-facing. Lys-320 is subject to N6-acetyllysine; alternate. Lys-320 carries the N6-succinyllysine; alternate modification. Lys-336 is subject to N6-acetyllysine. The helical transmembrane segment at 346–365 (GYVPNLLGIIPYAGIDLAVY) threads the bilayer. Over 366–388 (ELLKSHWLDNFAKDSVNPGVMVL) the chain is Mitochondrial intermembrane. The chain crosses the membrane as a helical span at residues 389 to 406 (LGCGALSSTCGQLASYPL). Residues 407–445 (ALVRTRMQAQAMIEKSPQLNMVGLFRRILSKEGLPGLYR) lie on the Mitochondrial matrix side of the membrane. An N6-acetyllysine; alternate modification is found at Lys-437. Lys-437 carries the N6-succinyllysine; alternate modification. The helical transmembrane segment at 446-465 (GITPNFMKVLPAVGISYVVY) threads the bilayer. The Mitochondrial intermembrane portion of the chain corresponds to 466–477 (ENMKQTLGVTQK).

The protein belongs to the mitochondrial carrier (TC 2.A.29) family. As to quaternary structure, monomer.

Its subcellular location is the mitochondrion inner membrane. The enzyme catalyses Mg(2+)(out) + phosphate(in) + ATP(out) = Mg(2+)(in) + phosphate(out) + ATP(in). It carries out the reaction ADP(out) + phosphate(in) + H(+)(out) = ADP(in) + phosphate(out) + H(+)(in). It catalyses the reaction AMP(out) + phosphate(in) = AMP(in) + phosphate(out). The catalysed reaction is phosphate(in) + ATP(out) + 2 H(+)(out) = phosphate(out) + ATP(in) + 2 H(+)(in). The enzyme catalyses dADP(in) + ADP(out) = dADP(out) + ADP(in). It carries out the reaction Mg(2+)(in) + ADP(out) + ATP(in) + H(+)(out) = Mg(2+)(out) + ADP(in) + ATP(out) + H(+)(in). It catalyses the reaction ADP(out) + diphosphate(in) = ADP(in) + diphosphate(out). The catalysed reaction is dAMP(in) + ADP(out) + H(+)(out) = dAMP(out) + ADP(in) + H(+)(in). The enzyme catalyses 3'-AMP(in) + ADP(out) + H(+)(out) = 3'-AMP(out) + ADP(in) + H(+)(in). It carries out the reaction dAMP(out) + phosphate(in) = dAMP(in) + phosphate(out). It catalyses the reaction 3'-AMP(out) + phosphate(in) = 3'-AMP(in) + phosphate(out). The catalysed reaction is dADP(out) + phosphate(in) + H(+)(out) = dADP(in) + phosphate(out) + H(+)(in). With respect to regulation, activated by an increase in cytosolic calcium levels that induce a conformational change of the N-terminal regulatory domain, uncapping the channel and allowing transport. Inhibited by bathophenanthroline, mersalyl, p-hydroxymercuribenzoate, bromcresol purple and tannic acid. In terms of biological role, electroneutral antiporter that mediates the transport of adenyl nucleotides through the inner mitochondrial membrane. Originally identified as an ATP-magnesium/inorganic phosphate antiporter, it also acts as a broad specificity adenyl nucleotide antiporter. By regulating the mitochondrial matrix adenyl nucleotide pool could adapt to changing cellular energetic demands and indirectly regulate adenyl nucleotide-dependent metabolic pathways. In vitro, a low activity is also observed with guanyl and pyrimidine nucleotides. May play a role in protecting cells against oxidative stress-induced cell death, by buffering calcium levels in the mitochondrial matrix through the formation of calcium-phosphate precipitates. This Bos taurus (Bovine) protein is Mitochondrial adenyl nucleotide antiporter SLC25A24 (SLC25A24).